A 231-amino-acid chain; its full sequence is Ribonuclease 3 (231 aa).

Positions 5-134 (QKKLKNDYGL…FLGALFIDQG (130 aa)) constitute an RNase III domain. Glu-47 serves as a coordination point for Mg(2+). Asp-51 is an active-site residue. Mg(2+) is bound by residues Asn-120 and Glu-123. Residue Glu-123 is part of the active site. A DRBM domain is found at 160–229 (DYKTELQEVL…AENAIKGQNH (70 aa)).

It belongs to the ribonuclease III family. As to quaternary structure, homodimer. Mg(2+) serves as cofactor.

It is found in the cytoplasm. It catalyses the reaction Endonucleolytic cleavage to 5'-phosphomonoester.. Its function is as follows. Digests double-stranded RNA. Involved in the processing of primary rRNA transcript to yield the immediate precursors to the large and small rRNAs (23S and 16S). Processes some mRNAs, and tRNAs when they are encoded in the rRNA operon. Processes pre-crRNA and tracrRNA of type II CRISPR loci if present in the organism. This is Ribonuclease 3 from Lactococcus lactis subsp. lactis (strain IL1403) (Streptococcus lactis).